The primary structure comprises 272 residues: Imidazole glycerol phosphate synthase subunit HisF (272 aa).

Catalysis depends on residues Asp12 and Asp131.

This sequence belongs to the HisA/HisF family. In terms of assembly, heterodimer of HisH and HisF.

It is found in the cytoplasm. It catalyses the reaction 5-[(5-phospho-1-deoxy-D-ribulos-1-ylimino)methylamino]-1-(5-phospho-beta-D-ribosyl)imidazole-4-carboxamide + L-glutamine = D-erythro-1-(imidazol-4-yl)glycerol 3-phosphate + 5-amino-1-(5-phospho-beta-D-ribosyl)imidazole-4-carboxamide + L-glutamate + H(+). Its pathway is amino-acid biosynthesis; L-histidine biosynthesis; L-histidine from 5-phospho-alpha-D-ribose 1-diphosphate: step 5/9. Its function is as follows. IGPS catalyzes the conversion of PRFAR and glutamine to IGP, AICAR and glutamate. The HisF subunit catalyzes the cyclization activity that produces IGP and AICAR from PRFAR using the ammonia provided by the HisH subunit. The sequence is that of Imidazole glycerol phosphate synthase subunit HisF from Methanopyrus kandleri (strain AV19 / DSM 6324 / JCM 9639 / NBRC 100938).